The following is a 715-amino-acid chain: Protein psiH (715 aa).

Residues 1–20 form the signal peptide; sequence MNYLKPTIFLILCLVTFVYS. Residues 21–651 lie on the Extracellular side of the membrane; the sequence is QPSTLTIQGT…ICKTGAVVST (631 aa). Positions 115 to 256 constitute a PA14 domain; the sequence is NYDSKKQVYV…YDYCGVCSGD (142 aa). Asn149, Asn377, Asn528, and Asn622 each carry an N-linked (GlcNAc...) asparagine glycan. The chain crosses the membrane as a helical span at residues 652 to 672; it reads AVIAGVTVAGAVALGVFIYGG. Over 673-715 the chain is Cytoplasmic; sequence KRGYDYWKESRNVQFSGSNSNPLYEQNPNGSGVNPLYNDNSAL. Residues 690–715 form a disordered region; it reads SNSNPLYEQNPNGSGVNPLYNDNSAL.

The protein belongs to the prespore-cell-inducing factor family.

The protein resides in the membrane. The polypeptide is Protein psiH (psiH) (Dictyostelium discoideum (Social amoeba)).